A 129-amino-acid polypeptide reads, in one-letter code: Large ribosomal subunit protein uL22 (129 aa).

It belongs to the universal ribosomal protein uL22 family. In terms of assembly, part of the 50S ribosomal subunit.

This protein binds specifically to 23S rRNA; its binding is stimulated by other ribosomal proteins, e.g. L4, L17, and L20. It is important during the early stages of 50S assembly. It makes multiple contacts with different domains of the 23S rRNA in the assembled 50S subunit and ribosome. In terms of biological role, the globular domain of the protein is located near the polypeptide exit tunnel on the outside of the subunit, while an extended beta-hairpin is found that lines the wall of the exit tunnel in the center of the 70S ribosome. The protein is Large ribosomal subunit protein uL22 of Mesorhizobium japonicum (strain LMG 29417 / CECT 9101 / MAFF 303099) (Mesorhizobium loti (strain MAFF 303099)).